We begin with the raw amino-acid sequence, 245 residues long: MRVDGRGKAELRHIHIHTNYLKHPEGSVLIEVGDTKVICSATIEERVPPFMRGEGKGWVTAEYSMIPRATEQRTIRESSKGKVTGRTMEIQRLIGRALRAVVDLEALGERTVWIDCDVIQADGGTRTASITGAYVAMVLAFEKLLQAEKVSKIPVKDYLAATSVGVVEEQGVVLDLNYAEDSKADVDMNVIMTGKGQFVEVQGTGEEATFSRAELNELLDAAEQGIFQLVEKQKEALGDIVSHIE.

Residues Arg-86 and 124–126 each bind phosphate; that span reads GTR.

The protein belongs to the RNase PH family. Homohexameric ring arranged as a trimer of dimers.

The catalysed reaction is tRNA(n+1) + phosphate = tRNA(n) + a ribonucleoside 5'-diphosphate. In terms of biological role, phosphorolytic 3'-5' exoribonuclease that plays an important role in tRNA 3'-end maturation. Removes nucleotide residues following the 3'-CCA terminus of tRNAs; can also add nucleotides to the ends of RNA molecules by using nucleoside diphosphates as substrates, but this may not be physiologically important. Probably plays a role in initiation of 16S rRNA degradation (leading to ribosome degradation) during starvation. The chain is Ribonuclease PH from Bacillus mycoides (strain KBAB4) (Bacillus weihenstephanensis).